The chain runs to 130 residues: Snaclec B8 (130 aa).

Cystine bridges form between cysteine 2–cysteine 13, cysteine 30–cysteine 124, and cysteine 99–cysteine 116. Positions 9–125 (HEGHCYKVFK…CELAYHFICM (117 aa)) constitute a C-type lectin domain.

This sequence belongs to the snaclec family. Heterodimer; disulfide-linked. In terms of tissue distribution, expressed by the venom gland.

The protein localises to the secreted. Its function is as follows. Interferes with one step of hemostasis (modulation of platelet aggregation, or coagulation cascade, for example). This chain is Snaclec B8, found in Macrovipera lebetinus (Levantine viper).